A 314-amino-acid polypeptide reads, in one-letter code: Homoserine kinase (314 aa).

P95–S105 contacts ATP.

Belongs to the GHMP kinase family. Homoserine kinase subfamily.

Its subcellular location is the cytoplasm. The catalysed reaction is L-homoserine + ATP = O-phospho-L-homoserine + ADP + H(+). It participates in amino-acid biosynthesis; L-threonine biosynthesis; L-threonine from L-aspartate: step 4/5. In terms of biological role, catalyzes the ATP-dependent phosphorylation of L-homoserine to L-homoserine phosphate. The sequence is that of Homoserine kinase from Rhodococcus opacus (strain B4).